The chain runs to 225 residues: UPF0173 metal-dependent hydrolase PF1764 (225 aa).

It belongs to the UPF0173 family.

The protein is UPF0173 metal-dependent hydrolase PF1764 of Pyrococcus furiosus (strain ATCC 43587 / DSM 3638 / JCM 8422 / Vc1).